The following is a 119-amino-acid chain: Large ribosomal subunit protein bL20 (119 aa).

It belongs to the bacterial ribosomal protein bL20 family.

Binds directly to 23S ribosomal RNA and is necessary for the in vitro assembly process of the 50S ribosomal subunit. It is not involved in the protein synthesizing functions of that subunit. In Paracoccus denitrificans (strain Pd 1222), this protein is Large ribosomal subunit protein bL20.